The primary structure comprises 558 residues: Inositol-3-phosphate synthase 1 (558 aa).

Residues G67, G68, N69, N70, D141, S177, V178, Q188, R191, T228, A229, N230, T231, G278, S279, D303, S306, N337, N338, D339, and K352 each contribute to the NAD(+) site. S279 is modified (phosphoserine). The residue at position 357 (S357) is a Phosphoserine. Residues G390, D391, D419, and S420 each contribute to the NAD(+) site. The segment at 537–558 (ATNGCTGDANGHLQEEPPMPTT) is disordered.

The protein belongs to the myo-inositol 1-phosphate synthase family. Requires NAD(+) as cofactor. Post-translationally, phosphorylation at Ser-279 and Ser-357 may be associated with a decrease in activity. Highly expressed in testis, ovary, heart, placenta and pancreas. Weakly expressed in blood leukocyte, thymus, skeletal muscle and colon.

It localises to the cytoplasm. The catalysed reaction is D-glucose 6-phosphate = 1D-myo-inositol 3-phosphate. It functions in the pathway polyol metabolism; myo-inositol biosynthesis; myo-inositol from D-glucose 6-phosphate: step 1/2. Its activity is regulated as follows. Inhibited by mood-stabilizing drugs such as valproate (VPA) and lithium. Its function is as follows. Key enzyme in myo-inositol biosynthesis pathway that catalyzes the conversion of glucose 6-phosphate to 1-myo-inositol 1-phosphate in a NAD-dependent manner. Rate-limiting enzyme in the synthesis of all inositol-containing compounds. In Homo sapiens (Human), this protein is Inositol-3-phosphate synthase 1 (ISYNA1).